A 173-amino-acid polypeptide reads, in one-letter code: Peptide deformylase (173 aa).

Fe cation-binding residues include Cys98 and His140. The active site involves Glu141. A Fe cation-binding site is contributed by His144.

Belongs to the polypeptide deformylase family. Requires Fe(2+) as cofactor.

It catalyses the reaction N-terminal N-formyl-L-methionyl-[peptide] + H2O = N-terminal L-methionyl-[peptide] + formate. Functionally, removes the formyl group from the N-terminal Met of newly synthesized proteins. Requires at least a dipeptide for an efficient rate of reaction. N-terminal L-methionine is a prerequisite for activity but the enzyme has broad specificity at other positions. In Caulobacter vibrioides (strain ATCC 19089 / CIP 103742 / CB 15) (Caulobacter crescentus), this protein is Peptide deformylase.